The sequence spans 184 residues: MADKYEPRLKTEYVSRIRGAMQEKFSYANVMMIPKLDKIVINMGVGEATADSKKPTIAAGDLAAIAGQKPVITKARNSIAGFKVREHMPIGAKVTLRGERMYEFLDRLINIALPRVRDFRGLNPKSFDGRGNFAMGIKEHIVFPEINYDKVDQMWGMDIIVCTTATSDDEARALLTEFNFPFRH.

The protein belongs to the universal ribosomal protein uL5 family. Part of the 50S ribosomal subunit; part of the 5S rRNA/L5/L18/L25 subcomplex. Contacts the 5S rRNA and the P site tRNA. Forms a bridge to the 30S subunit in the 70S ribosome.

This is one of the proteins that bind and probably mediate the attachment of the 5S RNA into the large ribosomal subunit, where it forms part of the central protuberance. In the 70S ribosome it contacts protein S13 of the 30S subunit (bridge B1b), connecting the 2 subunits; this bridge is implicated in subunit movement. Contacts the P site tRNA; the 5S rRNA and some of its associated proteins might help stabilize positioning of ribosome-bound tRNAs. In Agrobacterium fabrum (strain C58 / ATCC 33970) (Agrobacterium tumefaciens (strain C58)), this protein is Large ribosomal subunit protein uL5.